Reading from the N-terminus, the 756-residue chain is Xylosyl- and glucuronyltransferase LARGE1 (756 aa).

Topologically, residues 1-10 are cytoplasmic; sequence MLGICRGRRK. The chain crosses the membrane as a helical; Signal-anchor for type II membrane protein span at residues 11 to 31; sequence FLAASLSLLCIPAITWIYLFS. Over 32–756 the chain is Lumenal; the sequence is GSFEDGKPVS…LKYLTAENNS (725 aa). 2 disordered regions span residues 43-69 and 81-109; these read SPLE…EVRM and RQLS…EGTG. Polar residues predominate over residues 44 to 58; the sequence is PLESQAHSPRYTASS. The stretch at 53–95 forms a coiled coil; sequence RYTASSQRERESLEVRMREVEEENRALRRQLSLAQGRAPSHRR. Residues 59–69 show a composition bias toward basic and acidic residues; sequence QRERESLEVRM. N-linked (GlcNAc...) asparagine glycosylation is found at N97, N122, and N148. Residues 138–413 are xylosyltransferase activity; that stretch reads IHVAIVCAGY…FLEYDGNLLR (276 aa). The Mn(2+) site is built by D242 and D244. N-linked (GlcNAc...) asparagine glycosylation is present at N272. The interval 414 to 756 is glucuronyltransferase activity; that stretch reads RELFGCPSEA…LKYLTAENNS (343 aa). Positions 563 and 565 each coordinate Mn(2+).

In the C-terminal section; belongs to the glycosyltransferase 49 family. This sequence in the N-terminal section; belongs to the glycosyltransferase 8 family. As to quaternary structure, interacts with DAG1 (via the N-terminal domain of alpha-DAG1); the interaction increases binding of DAG1 to laminin. Interacts with B4GAT1. Mn(2+) serves as cofactor. In terms of tissue distribution, ubiquitous. Highest expression in heart, brain and skeletal muscle.

Its subcellular location is the golgi apparatus membrane. The catalysed reaction is 3-O-[beta-D-GlcA-(1-&gt;3)-beta-D-Xyl-(1-&gt;4)-Rib-ol-P-Rib-ol-P-3-beta-D-GalNAc-(1-&gt;3)-beta-D-GlcNAc-(1-&gt;4)-(O-6-P-alpha-D-Man)]-Thr-[protein] + UDP-alpha-D-xylose = 3-O-[alpha-D-Xyl-(1-&gt;3)-beta-D-GlcA-(1-&gt;4)-beta-D-Xyl-(1-&gt;4)-Rib-ol-P-Rib-ol-P-3-beta-D-GalNAc-(1-&gt;3)-beta-D-GlcNAc-(1-&gt;4)-(O-6-P-alpha-D-Man)]-Thr-[protein] + UDP + H(+). It carries out the reaction 3-O-{(1-&gt;[3)-alpha-D-Xyl-(1-&gt;3)-beta-D-GlcA-(1-&gt;](n)-4)-beta-D-Xyl-(1-&gt;4)-Rib-ol-P-Rib-ol-P-3-beta-D-GalNAc-(1-&gt;3)-beta-D-GlcNAc-(1-&gt;4)-O-6-P-alpha-D-Man}-L-Thr-[protein] + UDP-alpha-D-glucuronate = 3-O-{beta-D-GlcA-(1-&gt;[3)-alpha-D-Xyl-(1-&gt;3)-beta-D-GlcA-(1-&gt;](n)-4)-beta-D-Xyl-(1-&gt;4)-Rib-ol-P-Rib-ol-P-3-beta-D-GalNAc-(1-&gt;3)-beta-D-GlcNAc-(1-&gt;4)-O-6-P-alpha-D-Man}-L-Thr-[protein] + UDP + H(+). It catalyses the reaction 3-O-{beta-D-GlcA-(1-&gt;[3)-alpha-D-Xyl-(1-&gt;3)-beta-D-GlcA-(1-&gt;](n)-4)-beta-D-Xyl-(1-&gt;4)-Rib-ol-P-Rib-ol-P-3-beta-D-GalNAc-(1-&gt;3)-beta-D-GlcNAc-(1-&gt;4)-O-6-P-alpha-D-Man}-L-Thr-[protein] + UDP-alpha-D-xylose = 3-O-{(1-&gt;[3)-alpha-D-Xyl-(1-&gt;3)-beta-D-GlcA-(1-&gt;](n+1)-4)-beta-D-Xyl-(1-&gt;4)-Rib-ol-P-Rib-ol-P-3-beta-D-GalNAc-(1-&gt;3)-beta-D-GlcNAc-(1-&gt;4)-O-6-P-alpha-D-Man}-L-Thr-[protein] + UDP + H(+). It functions in the pathway protein modification; protein glycosylation. Functionally, bifunctional glycosyltransferase with both alpha-1,3-xylosyltransferase and beta-1,3-glucuronyltransferase activities involved in the maturation of alpha-dystroglycan (DAG1) by glycosylation leading to DAG1 binding to laminin G-like domain-containing extracellular proteins with high affinity. Elongates the glucuronyl-beta-1,4-xylose-beta disaccharide primer structure initiated by B4GAT1 by adding repeating units [-3-Xylose-alpha-1,3-GlcA-beta-1-] to produce a heteropolysaccharide. Requires the phosphorylation of core M3 (O-mannosyl trisaccharide) by POMK to elongate the glucuronyl-beta-1,4-xylose-beta disaccharide primer. Plays a key role in skeletal muscle function and regeneration. The polypeptide is Xylosyl- and glucuronyltransferase LARGE1 (Homo sapiens (Human)).